The chain runs to 173 residues: NADH-ubiquinone oxidoreductase chain 6 (173 aa).

Transmembrane regions (helical) follow at residues 1–21 (MTYF…AVAS), 25–45 (PYFA…VLVG), 53–73 (LVLF…SAAL), 87–107 (VLGY…FFWG), and 141–161 (GGML…VLEL).

The protein belongs to the complex I subunit 6 family.

Its subcellular location is the mitochondrion membrane. The catalysed reaction is a ubiquinone + NADH + 5 H(+)(in) = a ubiquinol + NAD(+) + 4 H(+)(out). Its function is as follows. Core subunit of the mitochondrial membrane respiratory chain NADH dehydrogenase (Complex I) that is believed to belong to the minimal assembly required for catalysis. Complex I functions in the transfer of electrons from NADH to the respiratory chain. The immediate electron acceptor for the enzyme is believed to be ubiquinone. This is NADH-ubiquinone oxidoreductase chain 6 (MT-ND6) from Carassius auratus (Goldfish).